Here is a 369-residue protein sequence, read N- to C-terminus: Serpentine receptor class epsilon-2 (369 aa).

The Extracellular segment spans residues 1 to 20; the sequence is MLIQYHKISNNDPNRIQLLS. A helical membrane pass occupies residues 21–41; it reads MIFCEIILLIFELFEFAAIIF. Residues 42 to 55 are Cytoplasmic-facing; it reads NMSRYQFHFNLKVV. The helical transmembrane segment at 56–76 threads the bilayer; sequence VGYAIFAYWFDIIARITIAFF. The Extracellular segment spans residues 77–118; that stretch reads EIGLFNLDDQTIAVETEKLPWNYKNMFFMLLFCCSTYRVYFM. A helical membrane pass occupies residues 119 to 139; the sequence is FLICSVTLLLAVERFLATIWV. Residues 140-148 are Cytoplasmic-facing; it reads STYESVQHK. Residues 149–169 traverse the membrane as a helical segment; that stretch reads WVSIVLTSTNSIAGIFGSLLF. The Extracellular portion of the chain corresponds to 170-178; that stretch reads HYELIFDTA. Residues 179–199 form a helical membrane-spanning segment; the sequence is VWCSLGLCFNFVSIFLYVILF. Residues 200–234 are Cytoplasmic-facing; the sequence is NSNKSKIELCQTREITQSYTLSLRFQLNENLKIMN. The helical transmembrane segment at 235–255 threads the bilayer; the sequence is WIKNSILVVTCFNTLLAGFLI. The Extracellular segment spans residues 256-274; that stretch reads ASNNEYLKNDYPVLVKCCH. Residues 275-295 traverse the membrane as a helical segment; sequence TFLNLGIAIYAQVVFFVAILA. Residues 296–369 are Cytoplasmic-facing; the sequence is DRHFRTYFLR…VAKKKRFWRV (74 aa).

Belongs to the nematode receptor-like protein sre family.

The protein localises to the cell membrane. The polypeptide is Serpentine receptor class epsilon-2 (sre-2) (Caenorhabditis elegans).